Reading from the N-terminus, the 274-residue chain is NH(3)-dependent NAD(+) synthetase (274 aa).

46–53 (GISGGQDS) is a binding site for ATP. Position 52 (D52) interacts with Mg(2+). A deamido-NAD(+)-binding site is contributed by R140. T160 lines the ATP pocket. E165 contributes to the Mg(2+) binding site. The deamido-NAD(+) site is built by K173 and D180. Residues K189 and T211 each coordinate ATP. 260–261 (HK) is a binding site for deamido-NAD(+).

This sequence belongs to the NAD synthetase family. In terms of assembly, homodimer.

The catalysed reaction is deamido-NAD(+) + NH4(+) + ATP = AMP + diphosphate + NAD(+) + H(+). The protein operates within cofactor biosynthesis; NAD(+) biosynthesis; NAD(+) from deamido-NAD(+) (ammonia route): step 1/1. Catalyzes the ATP-dependent amidation of deamido-NAD to form NAD. Uses ammonia as a nitrogen source. The chain is NH(3)-dependent NAD(+) synthetase from Sodalis glossinidius (strain morsitans).